Reading from the N-terminus, the 352-residue chain is MKKNKLSKNQHRRIQAHHQYRLHPTSLTDDKNNQLDDAQFGEPQQGVVISRFGQHADVEGHQGQQQRCHIRRNVLSLVTGDRVIWRPGIPRQENRNVKGIVEAVHERKSVLTRPDFYDGIKPMAANIDQIVIVSAVIPDLSLNMIDRYLVVSESLNIKPLLLLNKIDLLTPNERKKINLRLNIYRNIHYTVLEVSAQTGEGIADLQANLLDRVSIFSGQSGVGKSSLLNTLLPPTEQQILVEALSEKSALGQHTTTTSRLYHFQQGGDLIDSPGIREFGLWHLTQEQIIQGFIEFRDYVGHCKFRDCAHIDDPCCALRDAVQKGHIAKERFDNYHQILSEITLKGKKLFNQD.

The segment covering 1-21 (MKKNKLSKNQHRRIQAHHQYR) has biased composition (basic residues). Positions 1–38 (MKKNKLSKNQHRRIQAHHQYRLHPTSLTDDKNNQLDDA) are disordered. Residues 116–278 (FYDGIKPMAA…LIDSPGIREF (163 aa)) form the CP-type G domain. GTP is bound by residues 164–167 (NKID) and 218–226 (GQSGVGKSS). Cysteine 302, cysteine 307, histidine 309, and cysteine 315 together coordinate Zn(2+).

The protein belongs to the TRAFAC class YlqF/YawG GTPase family. RsgA subfamily. As to quaternary structure, monomer. Associates with 30S ribosomal subunit, binds 16S rRNA. Zn(2+) serves as cofactor.

The protein localises to the cytoplasm. Functionally, one of several proteins that assist in the late maturation steps of the functional core of the 30S ribosomal subunit. Helps release RbfA from mature subunits. May play a role in the assembly of ribosomal proteins into the subunit. Circularly permuted GTPase that catalyzes slow GTP hydrolysis, GTPase activity is stimulated by the 30S ribosomal subunit. The polypeptide is Small ribosomal subunit biogenesis GTPase RsgA (Hamiltonella defensa subsp. Acyrthosiphon pisum (strain 5AT)).